Here is a 426-residue protein sequence, read N- to C-terminus: Glucose-6-phosphate isomerase (426 aa).

E282 serves as the catalytic Proton donor. Catalysis depends on residues H303 and K417.

It belongs to the GPI family.

Its subcellular location is the cytoplasm. It catalyses the reaction alpha-D-glucose 6-phosphate = beta-D-fructose 6-phosphate. Its pathway is carbohydrate biosynthesis; gluconeogenesis. It participates in carbohydrate degradation; glycolysis; D-glyceraldehyde 3-phosphate and glycerone phosphate from D-glucose: step 2/4. In terms of biological role, catalyzes the reversible isomerization of glucose-6-phosphate to fructose-6-phosphate. The chain is Glucose-6-phosphate isomerase from Onion yellows phytoplasma (strain OY-M).